The chain runs to 262 residues: Acyl-[acyl-carrier-protein]--UDP-N-acetylglucosamine O-acyltransferase (262 aa).

It belongs to the transferase hexapeptide repeat family. LpxA subfamily. In terms of assembly, homotrimer.

Its subcellular location is the cytoplasm. The catalysed reaction is a (3R)-hydroxyacyl-[ACP] + UDP-N-acetyl-alpha-D-glucosamine = a UDP-3-O-[(3R)-3-hydroxyacyl]-N-acetyl-alpha-D-glucosamine + holo-[ACP]. Its pathway is glycolipid biosynthesis; lipid IV(A) biosynthesis; lipid IV(A) from (3R)-3-hydroxytetradecanoyl-[acyl-carrier-protein] and UDP-N-acetyl-alpha-D-glucosamine: step 1/6. Involved in the biosynthesis of lipid A, a phosphorylated glycolipid that anchors the lipopolysaccharide to the outer membrane of the cell. The protein is Acyl-[acyl-carrier-protein]--UDP-N-acetylglucosamine O-acyltransferase of Enterobacter sp. (strain 638).